A 757-amino-acid polypeptide reads, in one-letter code: Probable serine/threonine-protein kinase pknA2 (757 aa).

In terms of domain architecture, Protein kinase spans 14-274 (YRIVRNIAEG…DGAAAAEELS (261 aa)). Residues 20-28 (IAEGGMATV) and Lys-43 contribute to the ATP site. The Proton acceptor role is filled by Asp-140. Residues 344-387 (DTGGAADVNPPAPPVAPTTALDSSTPADASAPHKTQIMAQSGSE) are disordered. PASTA domains are found at residues 466 to 539 (DANA…VVSK), 545 to 614 (TIPK…TLSK), and 615 to 681 (GPMP…VISK).

The protein belongs to the protein kinase superfamily. Ser/Thr protein kinase family.

The enzyme catalyses L-seryl-[protein] + ATP = O-phospho-L-seryl-[protein] + ADP + H(+). It carries out the reaction L-threonyl-[protein] + ATP = O-phospho-L-threonyl-[protein] + ADP + H(+). The sequence is that of Probable serine/threonine-protein kinase pknA2 (pknA2) from Bifidobacterium longum (strain NCC 2705).